Consider the following 186-residue polypeptide: Der GTPase-activating protein YihI (186 aa).

Positions 1–65 are disordered; sequence MARTKKTRRI…AGSRHSAVDT (65 aa). Basic and acidic residues-rich tracts occupy residues 9–25 and 34–45; these read RITD…RPEN and TRYELDAKSREE.

This sequence belongs to the YihI family. Interacts with Der.

Its function is as follows. A GTPase-activating protein (GAP) that modifies Der/EngA GTPase function. May play a role in ribosome biogenesis. The protein is Der GTPase-activating protein YihI of Histophilus somni (strain 129Pt) (Haemophilus somnus).